Here is a 426-residue protein sequence, read N- to C-terminus: Phosphoribosylamine--glycine ligase (426 aa).

The 208-residue stretch at 113-320 (KSLMTEAKIP…LLELLYRAST (208 aa)) folds into the ATP-grasp domain. 139-200 (LESKSIPIVI…EEFMEGQEAS (62 aa)) contributes to the ATP binding site. Mg(2+) is bound by residues Glu-290 and Asn-292.

Belongs to the GARS family. Mg(2+) is required as a cofactor. It depends on Mn(2+) as a cofactor.

The enzyme catalyses 5-phospho-beta-D-ribosylamine + glycine + ATP = N(1)-(5-phospho-beta-D-ribosyl)glycinamide + ADP + phosphate + H(+). Its pathway is purine metabolism; IMP biosynthesis via de novo pathway; N(1)-(5-phospho-D-ribosyl)glycinamide from 5-phospho-alpha-D-ribose 1-diphosphate: step 2/2. This Leptospira interrogans serogroup Icterohaemorrhagiae serovar copenhageni (strain Fiocruz L1-130) protein is Phosphoribosylamine--glycine ligase.